We begin with the raw amino-acid sequence, 194 residues long: NADH-quinone oxidoreductase subunit B 1 (194 aa).

Positions 1 to 12 (MGVTPVSNQPLV) are enriched in polar residues. Residues 1 to 23 (MGVTPVSNQPLVAQQPKGIIDPS) are disordered. 4 residues coordinate [4Fe-4S] cluster: Cys73, Cys74, Cys138, and Cys168.

The protein belongs to the complex I 20 kDa subunit family. As to quaternary structure, NDH-1 is composed of 14 different subunits. Subunits NuoB, C, D, E, F, and G constitute the peripheral sector of the complex. Requires [4Fe-4S] cluster as cofactor.

The protein localises to the cell inner membrane. The catalysed reaction is a quinone + NADH + 5 H(+)(in) = a quinol + NAD(+) + 4 H(+)(out). Its function is as follows. NDH-1 shuttles electrons from NADH, via FMN and iron-sulfur (Fe-S) centers, to quinones in the respiratory chain. The immediate electron acceptor for the enzyme in this species is believed to be ubiquinone. Couples the redox reaction to proton translocation (for every two electrons transferred, four hydrogen ions are translocated across the cytoplasmic membrane), and thus conserves the redox energy in a proton gradient. The protein is NADH-quinone oxidoreductase subunit B 1 of Rhizobium etli (strain ATCC 51251 / DSM 11541 / JCM 21823 / NBRC 15573 / CFN 42).